The primary structure comprises 91 residues: ITCGQVSSSLAPCIGYVRGGGAVPPACCNGIRNVNNLARTTPDRRTACNCLKQLSGSISGVNPNNAAALPGKCGVNIPYKISASTNCATVK.

4 disulfide bridges follow: Cys-3–Cys-50, Cys-13–Cys-27, Cys-28–Cys-73, and Cys-48–Cys-87.

This sequence belongs to the plant LTP family.

Functionally, plant non-specific lipid-transfer proteins transfer phospholipids as well as galactolipids across membranes. May play a role in wax or cutin deposition in the cell walls of expanding epidermal cells and certain secretory tissues. This is Non-specific lipid-transfer protein 1 from Prunus armeniaca (Apricot).